Reading from the N-terminus, the 475-residue chain is Glutamate--tRNA ligase (475 aa).

Positions 8–18 (PSPTGTLHIGT) match the 'HIGH' region motif. Residues 247–251 (KLSKR) carry the 'KMSKS' region motif. Lysine 250 is an ATP binding site.

This sequence belongs to the class-I aminoacyl-tRNA synthetase family. Glutamate--tRNA ligase type 1 subfamily. In terms of assembly, monomer.

The protein localises to the cytoplasm. The catalysed reaction is tRNA(Glu) + L-glutamate + ATP = L-glutamyl-tRNA(Glu) + AMP + diphosphate. Functionally, catalyzes the attachment of glutamate to tRNA(Glu) in a two-step reaction: glutamate is first activated by ATP to form Glu-AMP and then transferred to the acceptor end of tRNA(Glu). This is Glutamate--tRNA ligase from Synechococcus sp. (strain RCC307).